The sequence spans 190 residues: Putative 3-methyladenine DNA glycosylase (190 aa).

It belongs to the DNA glycosylase MPG family.

The protein is Putative 3-methyladenine DNA glycosylase of Chlamydia abortus (strain DSM 27085 / S26/3) (Chlamydophila abortus).